We begin with the raw amino-acid sequence, 1128 residues long: Major DNA-binding protein (1128 aa).

Residues 453-466 (CELCQGTCPASCIH) fold into a zinc finger. The tract at residues 1098-1128 (QIEEFAPQATLSTLAASRKRKITSILSDIDL) is required for nuclear localization.

It belongs to the herpesviridae major DNA-binding protein family. In terms of assembly, homooligomers. Forms double-helical filaments necessary for the formation of replication compartments within the host nucleus. Interacts with the origin-binding protein. Interacts with the helicase primase complex; this interaction stimulates primer synthesis activity of the helicase-primase complex. Interacts with the DNA polymerase. Interacts with the alkaline exonuclease; this interaction increases its nuclease processivity.

The protein resides in the host nucleus. Functionally, single-stranded DNA-binding protein required for DNA replication. Its function is as follows. Plays several crucial roles in viral infection. Participates in the opening of the viral DNA origin to initiate replication by interacting with the origin-binding protein. May disrupt loops, hairpins and other secondary structures present on ssDNA to reduce and eliminate pausing of viral DNA polymerase at specific sites during elongation. Promotes viral DNA recombination by performing strand-transfer, characterized by the ability to transfer a DNA strand from a linear duplex to a complementary single-stranded DNA circle. Can also catalyze the renaturation of complementary single strands. Additionally, reorganizes the host cell nucleus, leading to the formation of prereplicative sites and replication compartments. This process is driven by the protein which can form double-helical filaments in the absence of DNA. This is Major DNA-binding protein from Saimiri sciureus (Common squirrel monkey).